We begin with the raw amino-acid sequence, 338 residues long: Ketol-acid reductoisomerase (NADP(+)) (338 aa).

Residues 1–181 (MKVFYDKDAD…GGGRAGIIET (181 aa)) form the KARI N-terminal Rossmann domain. NADP(+)-binding positions include 24 to 27 (YGSQ), Arg-47, and Ser-52. His-107 is a catalytic residue. Residue Gly-133 coordinates NADP(+). A KARI C-terminal knotted domain is found at 182-327 (NFREETETDL…SKLRAMMPWI (146 aa)). Mg(2+) contacts are provided by Asp-190, Glu-194, Glu-226, and Glu-230. Ser-251 is a binding site for substrate.

The protein belongs to the ketol-acid reductoisomerase family. It depends on Mg(2+) as a cofactor.

The enzyme catalyses (2R)-2,3-dihydroxy-3-methylbutanoate + NADP(+) = (2S)-2-acetolactate + NADPH + H(+). It carries out the reaction (2R,3R)-2,3-dihydroxy-3-methylpentanoate + NADP(+) = (S)-2-ethyl-2-hydroxy-3-oxobutanoate + NADPH + H(+). The protein operates within amino-acid biosynthesis; L-isoleucine biosynthesis; L-isoleucine from 2-oxobutanoate: step 2/4. It functions in the pathway amino-acid biosynthesis; L-valine biosynthesis; L-valine from pyruvate: step 2/4. Its function is as follows. Involved in the biosynthesis of branched-chain amino acids (BCAA). Catalyzes an alkyl-migration followed by a ketol-acid reduction of (S)-2-acetolactate (S2AL) to yield (R)-2,3-dihydroxy-isovalerate. In the isomerase reaction, S2AL is rearranged via a Mg-dependent methyl migration to produce 3-hydroxy-3-methyl-2-ketobutyrate (HMKB). In the reductase reaction, this 2-ketoacid undergoes a metal-dependent reduction by NADPH to yield (R)-2,3-dihydroxy-isovalerate. In Paraburkholderia xenovorans (strain LB400), this protein is Ketol-acid reductoisomerase (NADP(+)).